The chain runs to 387 residues: MSSGKRRNPLGLSLPPTVNEQSESGEATAEEATATVPLEEQLKKLGLTEPQTQRLSEFLQVKEGIKELSEDMLQTEGELGHGNGGVVNKCVHRKTGVIMARKLVHLEIKPSVRQQIVKELAVLHKCNSPFIVGFYGAFVDNNDISICMEYMDGLSLDIVLKKVGRLPEKFVGRISVAVVRGLTYLKDEIKILHRDVKPSNMLVNSNGEIKLCDFGVSGMLIDSMANSFVGTRSYMAPERLTGSHYTISSDIWSFGLSLVELLIGRYPVPAPSQAEYATMFNVAENEIELADSLEEPNYHPPSNPASMAIFEMLDYIVNGPPPTLPKRFFTDEVIGFVSKCLRKLPSERATLKSLTADVFFTQYADHDDQGEFAVFVKGTINLPKLNP.

Positions 1–37 are disordered; that stretch reads MSSGKRRNPLGLSLPPTVNEQSESGEATAEEATATVP. Positions 16-25 are enriched in polar residues; that stretch reads PTVNEQSESG. The segment covering 26 to 35 has biased composition (low complexity); sequence EATAEEATAT. Positions 73-360 constitute a Protein kinase domain; the sequence is LQTEGELGHG…LKSLTADVFF (288 aa). Residues 79 to 87 and K102 each bind ATP; that span reads LGHGNGGVV. The active-site Proton acceptor is D195. Phosphoserine is present on residues S223 and S227.

The protein belongs to the protein kinase superfamily. STE Ser/Thr protein kinase family. MAP kinase kinase subfamily. As to quaternary structure, interacts with ksr-1.

The catalysed reaction is L-seryl-[protein] + ATP = O-phospho-L-seryl-[protein] + ADP + H(+). It carries out the reaction L-threonyl-[protein] + ATP = O-phospho-L-threonyl-[protein] + ADP + H(+). The enzyme catalyses L-tyrosyl-[protein] + ATP = O-phospho-L-tyrosyl-[protein] + ADP + H(+). Activated by tyrosine and threonine phosphorylation catalyzed by MAP kinase kinase kinases. In terms of biological role, functions in the let-60 Ras signaling pathway; acts downstream of lin-45 raf kinase, but before the sur-1/mpk-1 gene product in controlling vulval cell differentiation. Required for progression of developing oocytes through the pachytene stage. Plays a role in responses to M.nematophilum-mediated bacterial infection by promoting tail swelling and preventing constipation. Involved in fluid homeostasis. Positively regulates lifespan upstream of mpk-1. The polypeptide is Dual specificity mitogen-activated protein kinase kinase mek-2 (mek-2) (Caenorhabditis elegans).